The primary structure comprises 475 residues: 3-keto-steroid reductase ERG27 (475 aa).

Residues I32, I55, T59, and K65 each contribute to the NADP(+) site. Active-site proton donor residues include S249 and Y272. NADP(+) is bound by residues Y272, K276, V324, and S326. K276 (lowers pKa of active site Tyr) is an active-site residue.

Belongs to the short-chain dehydrogenases/reductases (SDR) family. ERG27 subfamily. In terms of assembly, heterotetramer of ERG25, ERG26, ERG27 and ERG28. ERG28 acts as a scaffold to tether ERG27 and other 4,4-demethylation-related enzymes, forming a demethylation enzyme complex, in the endoplasmic reticulum.

Its subcellular location is the endoplasmic reticulum membrane. It localises to the lipid droplet. It functions in the pathway steroid metabolism; ergosterol biosynthesis. 3-keto-steroid reductase; part of the third module of ergosterol biosynthesis pathway that includes the late steps of the pathway. ERG27 is a catalytic component of the C-4 demethylation complex that catalyzes the conversion of 4,4-dimethylfecosterol into fecosterol via 4-methylfecosterol. The third module or late pathway involves the ergosterol synthesis itself through consecutive reactions that mainly occur in the endoplasmic reticulum (ER) membrane. Firstly, the squalene synthase ERG9 catalyzes the condensation of 2 farnesyl pyrophosphate moieties to form squalene, which is the precursor of all steroids. Squalene synthase is crucial for balancing the incorporation of farnesyl diphosphate (FPP) into sterol and nonsterol isoprene synthesis. Secondly, squalene is converted into lanosterol by the consecutive action of the squalene epoxidase ERG1 and the lanosterol synthase ERG7. Then, the delta(24)-sterol C-methyltransferase ERG6 methylates lanosterol at C-24 to produce eburicol. Eburicol is the substrate of the sterol 14-alpha demethylase encoded by CYP51A, CYP51B and CYP51C, to yield 4,4,24-trimethyl ergosta-8,14,24(28)-trienol. CYP51B encodes the enzyme primarily responsible for sterol 14-alpha-demethylation, and plays an essential role in ascospore formation. CYP51A encodes an additional sterol 14-alpha-demethylase, induced on ergosterol depletion and responsible for the intrinsic variation in azole sensitivity. The third CYP51 isoform, CYP51C, does not encode a sterol 14-alpha-demethylase, but is required for full virulence on host wheat ears. The C-14 reductase ERG24 then reduces the C14=C15 double bond which leads to 4,4-dimethylfecosterol. A sequence of further demethylations at C-4, involving the C-4 demethylation complex containing the C-4 methylsterol oxidases ERG25, the sterol-4-alpha-carboxylate 3-dehydrogenase ERG26 and the 3-keto-steroid reductase ERG27, leads to the production of fecosterol via 4-methylfecosterol. ERG28 has a role as a scaffold to help anchor ERG25, ERG26 and ERG27 to the endoplasmic reticulum. The C-8 sterol isomerase ERG2 then catalyzes the reaction which results in unsaturation at C-7 in the B ring of sterols and thus converts fecosterol to episterol. The sterol-C5-desaturases ERG3A and ERG3BB then catalyze the introduction of a C-5 double bond in the B ring to produce 5-dehydroepisterol. The C-22 sterol desaturases ERG5A and ERG5B further convert 5-dehydroepisterol into ergosta-5,7,22,24(28)-tetraen-3beta-ol by forming the C-22(23) double bond in the sterol side chain. Finally, ergosta-5,7,22,24(28)-tetraen-3beta-ol is substrate of the C-24(28) sterol reductase ERG4 to produce ergosterol. This chain is 3-keto-steroid reductase ERG27, found in Gibberella zeae (strain ATCC MYA-4620 / CBS 123657 / FGSC 9075 / NRRL 31084 / PH-1) (Wheat head blight fungus).